The chain runs to 42 residues: Photosystem II reaction center protein J (42 aa).

The chain crosses the membrane as a helical span at residues 10-30; that stretch reads IPLWLIATVAGILVLTVVGIF.

The protein belongs to the PsbJ family. As to quaternary structure, PSII is composed of 1 copy each of membrane proteins PsbA, PsbB, PsbC, PsbD, PsbE, PsbF, PsbH, PsbI, PsbJ, PsbK, PsbL, PsbM, PsbT, PsbX, PsbY, PsbZ, Psb30/Ycf12, at least 3 peripheral proteins of the oxygen-evolving complex and a large number of cofactors. It forms dimeric complexes.

It localises to the plastid. Its subcellular location is the chloroplast thylakoid membrane. Functionally, one of the components of the core complex of photosystem II (PSII). PSII is a light-driven water:plastoquinone oxidoreductase that uses light energy to abstract electrons from H(2)O, generating O(2) and a proton gradient subsequently used for ATP formation. It consists of a core antenna complex that captures photons, and an electron transfer chain that converts photonic excitation into a charge separation. The sequence is that of Photosystem II reaction center protein J from Chara vulgaris (Common stonewort).